Here is a 290-residue protein sequence, read N- to C-terminus: MESDLTVEESETIKTRSRRPLTEHRRHSLLPLQWKLAHSSRWMAQVVASEFSLLAFLLLLLMVFSKKWLYPSKSRFHQRYPQNITKRVYTSIHSMSTGLLYICISKSCLSSDNEEDNFKMWTIHPAFGVAKISFILAVGLGFVLTVWLHLPYLPCLQRMPFFGLIGIILSFCEVTLIFLTLLLFPVNLWIYELKKNISVPIGWSYFIGWLVLILYLTCGILCYLNHKNFWSLIMSSSSINATCSSSVPVSLMNTSQISKSQADILDPTQDDQKPLSSDNIALPPNPDTTD.

Ser28 bears the Phosphoserine mark. 4 helical membrane passes run 44 to 64, 132 to 152, 164 to 184, and 201 to 221; these read AQVVASEFSLLAFLLLLLMVF, ISFILAVGLGFVLTVWLHLPY, LIGIILSFCEVTLIFLTLLLF, and IGWSYFIGWLVLILYLTCGIL. The interval 262 to 290 is disordered; the sequence is ADILDPTQDDQKPLSSDNIALPPNPDTTD.

It is found in the membrane. Its function is as follows. Component of the outer dense fibers (ODF) of spermatozoa which could be involved in sperm tail structure, sperm movement and general organization of cellular cytoskeleton. The sequence is that of Outer dense fiber protein 4 (Odf4) from Rattus norvegicus (Rat).